A 98-amino-acid chain; its full sequence is Integration host factor subunit alpha (98 aa).

The tract at residues 49–72 is disordered; sequence FGNFDLRDKNQRPGRNPKTGEDIP.

This sequence belongs to the bacterial histone-like protein family. As to quaternary structure, heterodimer of an alpha and a beta chain.

This protein is one of the two subunits of integration host factor, a specific DNA-binding protein that functions in genetic recombination as well as in transcriptional and translational control. The chain is Integration host factor subunit alpha from Shewanella loihica (strain ATCC BAA-1088 / PV-4).